The sequence spans 491 residues: Probable allantoate deiminase (491 aa).

The N-terminal stretch at 1 to 32 (MALLLSYPRRHPSIHLLILSAYALFLLPILDG) is a signal peptide. Residue N109 is glycosylated (N-linked (GlcNAc...) asparagine). 4 residues coordinate Mn(2+): H120, D131, E168, and H234. N-linked (GlcNAc...) asparagine glycans are attached at residues N265 and N343. Mn(2+) is bound at residue H454.

Belongs to the peptidase M20A family. In terms of assembly, homodimer. Requires Mn(2+) as cofactor.

It is found in the endoplasmic reticulum. It carries out the reaction allantoate + H2O + 2 H(+) = (S)-2-ureidoglycine + NH4(+) + CO2. Its function is as follows. Involved in the catabolism of purine nucleotides. The sequential activity of AAH, UGLYAH and UAH allows a complete purine breakdown without the intermediate generation of urea. The sequence is that of Probable allantoate deiminase from Oryza sativa subsp. japonica (Rice).